Reading from the N-terminus, the 390-residue chain is Neuromedin-B receptor (390 aa).

Over 1–41 the chain is Extracellular; the sequence is MPPRSLSNLSFPTEANESELVPEVWEKDFLPDSDGTTAELV. N-linked (GlcNAc...) asparagine glycans are attached at residues Asn-8 and Asn-16. A helical membrane pass occupies residues 42 to 65; sequence IRCVIPSLYLIIISVGLLGNIMLV. The Cytoplasmic portion of the chain corresponds to 66–79; that stretch reads KIFLTNSAMRNVPN. Residues 80–99 form a helical membrane-spanning segment; it reads IFISNLAAGDLLLLLTCVPV. The Extracellular segment spans residues 100-117; that stretch reads DASRYFFDEWVFGKLGCK. Cys-116 and Cys-198 form a disulfide bridge. The helical transmembrane segment at 118 to 139 threads the bilayer; sequence LIPAIQLTSVGVSVFTLTALSA. At 140 to 156 the chain is on the cytoplasmic side; sequence DRYRAIVNPMDMQTSGV. A helical transmembrane segment spans residues 157-177; that stretch reads LLWTSLKAVGIWVVSVLLAVP. Over 178–211 the chain is Extracellular; the sequence is EAVFSEVARIGSLDNSSFTACIPYPQTDELHPKI. The N-linked (GlcNAc...) asparagine glycan is linked to Asn-192. A helical transmembrane segment spans residues 212–235; that stretch reads HSVLIFLVYFLIPLVIISIYYYHI. Residues 236–266 lie on the Cytoplasmic side of the membrane; that stretch reads AKTLIKSAHNLPGEYNEHTKKQMETRKRLAK. Residues 267 to 287 traverse the membrane as a helical segment; sequence IVLVFVGCFVFCWFPNHVLYL. Over 288–299 the chain is Extracellular; that stretch reads YRSFNYKEIDPS. The chain crosses the membrane as a helical span at residues 300 to 327; sequence LGHMIVTLVARVLSFSNSCVNPFALYLL. Residues 328 to 390 lie on the Cytoplasmic side of the membrane; it reads SESFRKHFNS…GHSTKQEIAL (63 aa). Cys-341 is lipidated: S-palmitoyl cysteine. Ser-352 carries the phosphoserine modification.

This sequence belongs to the G-protein coupled receptor 1 family. Expressed in a subset of neurons of the pre-Botzinger complex. Within the pre-Botzinger complex, there is some overlap with neurons expressing Grpr with some cells expressing only Grpr or Nmbr while some cells express both. Expressed in dorsal root ganglion neurons and mast cells. Expressed in lung.

The protein resides in the cell membrane. In terms of biological role, receptor for neuromedin-B. Contributes to the maintenance of basal sigh rate through signaling in the pre-Botzinger complex, a cluster of several thousand neurons in the ventrolateral medulla responsible for inspiration during respiratory activity. Contributes to the induction of sneezing following exposure to chemical irritants or allergens which causes release of NMB by nasal sensory neurons and activation of NMBR-expressing neurons in the sneeze-evoking region of the brainstem. These in turn activate neurons of the caudal ventral respiratory group, giving rise to the sneezing response. Contributes to induction of acute itch, possibly through its activation on dorsal root ganglion neurons by the NMB peptide. Plays a role in the innate immune response to influenza A virus infection by enhancing interferon alpha expression and reducing expression of IL6. Plays a role in CSF1-induced proliferation of osteoclast precursors by contributing to the positive regulation of the expression of the CSF1 receptor CSF1R. This is Neuromedin-B receptor (Nmbr) from Mus musculus (Mouse).